Reading from the N-terminus, the 352-residue chain is Ion-translocating oxidoreductase complex subunit D (352 aa).

The next 5 helical transmembrane spans lie at Ile-20–Gly-40, Gly-42–Leu-62, Ala-78–Ala-109, Pro-123–Leu-143, and Ile-148–Ala-168. Thr-187 carries the post-translational modification FMN phosphoryl threonine. The next 5 helical transmembrane spans lie at Ile-214–Leu-234, Trp-242–Phe-262, Leu-267–Leu-287, Leu-301–Pro-321, and Asp-322–Thr-342.

It belongs to the NqrB/RnfD family. As to quaternary structure, the complex is composed of six subunits: RsxA, RsxB, RsxC, RsxD, RsxE and RsxG. It depends on FMN as a cofactor.

It localises to the cell inner membrane. Functionally, part of a membrane-bound complex that couples electron transfer with translocation of ions across the membrane. Required to maintain the reduced state of SoxR. The polypeptide is Ion-translocating oxidoreductase complex subunit D (Escherichia coli O157:H7).